The primary structure comprises 554 residues: ATP synthase subunit alpha (554 aa).

G172–T179 is a binding site for ATP. A disordered region spans residues L528 to K554. The span at K535–K554 shows a compositional bias: basic and acidic residues.

Belongs to the ATPase alpha/beta chains family. F-type ATPases have 2 components, CF(1) - the catalytic core - and CF(0) - the membrane proton channel. CF(1) has five subunits: alpha(3), beta(3), gamma(1), delta(1), epsilon(1). CF(0) has three main subunits: a(1), b(2) and c(9-12). The alpha and beta chains form an alternating ring which encloses part of the gamma chain. CF(1) is attached to CF(0) by a central stalk formed by the gamma and epsilon chains, while a peripheral stalk is formed by the delta and b chains.

The protein resides in the cell membrane. It catalyses the reaction ATP + H2O + 4 H(+)(in) = ADP + phosphate + 5 H(+)(out). Its function is as follows. Produces ATP from ADP in the presence of a proton gradient across the membrane. The alpha chain is a regulatory subunit. The sequence is that of ATP synthase subunit alpha from Mycolicibacterium paratuberculosis (strain ATCC BAA-968 / K-10) (Mycobacterium paratuberculosis).